Reading from the N-terminus, the 160-residue chain is MSEISTALSEDCPCQSSHHYADCCGKFHLRQAFPETAEQLMRSRYTAYVLKNIPYIVVTTVPSQQTLLKPRLLQEWADNTTWLGLEILKTESLTKTQSAVEFKAIFQGEECEQAHQERSIFVKIEDRWYFVDPTVSLPTMKQPCVCGSGKKFKHCCGGFL.

It belongs to the UPF0225 family.

The protein is UPF0225 protein CGSHiGG_04185 of Haemophilus influenzae (strain PittGG).